The chain runs to 387 residues: Phosphoglycerate kinase (387 aa).

Residues 21–23 (DLN), Arg36, and 59–62 (HLGR) each bind substrate. Lys84 carries the N6-acetyllysine modification. Substrate-binding residues include Arg113 and Arg146. Residues Lys197, Glu314, and 340 to 343 (GGDT) contribute to the ATP site.

The protein belongs to the phosphoglycerate kinase family. In terms of assembly, monomer.

It localises to the cytoplasm. The enzyme catalyses (2R)-3-phosphoglycerate + ATP = (2R)-3-phospho-glyceroyl phosphate + ADP. Its pathway is carbohydrate degradation; glycolysis; pyruvate from D-glyceraldehyde 3-phosphate: step 2/5. This Shigella sonnei (strain Ss046) protein is Phosphoglycerate kinase.